The primary structure comprises 606 residues: MTNEASLTPIPLPAEKLAQLQTVTNGLSTAQIAWISGYLWGRSSGADTTNQSLPTSPATEQPVEPTVITILSASQTGNARRIAEELRDDLLAAHLKVNLINTGDYKFKQIDREKIILMVTSTQGEGEPPEEAVAFYKFLFSKKAPKLTHTAFAVFGLGDITYEHFAQAGNDFDRRFEELGGERLLPRVDADVDYEEAAEAWRKEVTELLEKRVPSANSAQIAATAISPVDEVSSTPYDKESPLTATLSVNQKITGRHSDKDVRHIEIDLGDSGLHYKPGDALGVWYENDPALIRECLDLLGLSGEESIKVNDKILPLAQALQQSFELTVNNTRLVESYATLTQNKALEKIISDKAALQDYAQNTPIVDMIRQAGGKLTAEQFVSLLRPLTPRLYSIASSQAEVENEVHLTVGVVRYEIDGHKRAGGASSFLADRLAENGNLRVFVEHNDNFRLPDNPDAPVIMIGPGTGVAPFRAFMQQRDNDGAKGKNWLFFGNPHFIEDFLYQVEWQAYVKQGLLTHIDLAWSRDQAKKVYVQDKLREKAAEIWKWIKEDGAYLYVCGDATHMAKDVDKALIDIIRQEGGMDEEAADEFLTELRLERRYQRDVY.

Residues 68-206 (ITILSASQTG…AAEAWRKEVT (139 aa)) form the Flavodoxin-like domain. FMN is bound by residues 74 to 79 (SQTGNA), 121 to 124 (STQG), and 157 to 166 (LGDITYEHFA). The 215-residue stretch at 240-454 (ESPLTATLSV…VEHNDNFRLP (215 aa)) folds into the FAD-binding FR-type domain. FAD is bound by residues Thr328, Gln362, 392–395 (RLYS), 410–412 (TVG), Tyr416, and 425–428 (GGAS). NADP(+) contacts are provided by residues 525-526 (SR), 531-535 (KVYVQ), and Asp568. Tyr606 is a binding site for FAD.

The protein belongs to the NADPH-dependent sulphite reductase flavoprotein subunit CysJ family. It in the N-terminal section; belongs to the flavodoxin family. In the C-terminal section; belongs to the flavoprotein pyridine nucleotide cytochrome reductase family. In terms of assembly, alpha(8)-beta(8). The alpha component is a flavoprotein, the beta component is a hemoprotein. It depends on FAD as a cofactor. FMN is required as a cofactor.

It carries out the reaction hydrogen sulfide + 3 NADP(+) + 3 H2O = sulfite + 3 NADPH + 4 H(+). Its pathway is sulfur metabolism; hydrogen sulfide biosynthesis; hydrogen sulfide from sulfite (NADPH route): step 1/1. Component of the sulfite reductase complex that catalyzes the 6-electron reduction of sulfite to sulfide. This is one of several activities required for the biosynthesis of L-cysteine from sulfate. The flavoprotein component catalyzes the electron flow from NADPH -&gt; FAD -&gt; FMN to the hemoprotein component. The sequence is that of Sulfite reductase [NADPH] flavoprotein alpha-component from Zymomonas mobilis subsp. mobilis (strain ATCC 31821 / ZM4 / CP4).